The primary structure comprises 312 residues: 2,3-dihydroxyphenylpropionate/2,3-dihydroxicinnamic acid 1,2-dioxygenase (312 aa).

His115 (proton donor) is an active-site residue. His179 functions as the Proton acceptor in the catalytic mechanism.

This sequence belongs to the LigB/MhpB extradiol dioxygenase family. In terms of assembly, homotetramer. Requires Fe(2+) as cofactor.

The catalysed reaction is 3-(2,3-dihydroxyphenyl)propanoate + O2 = (2Z,4E)-2-hydroxy-6-oxonona-2,4-dienedioate + H(+). It catalyses the reaction (2E)-3-(2,3-dihydroxyphenyl)prop-2-enoate + O2 = (2Z,4E,7E)-2-hydroxy-6-oxonona-2,4,7-trienedioate + H(+). The protein operates within aromatic compound metabolism; 3-phenylpropanoate degradation. Functionally, catalyzes the non-heme iron(II)-dependent oxidative cleavage of 2,3-dihydroxyphenylpropionic acid and 2,3-dihydroxicinnamic acid into 2-hydroxy-6-ketononadienedioate and 2-hydroxy-6-ketononatrienedioate, respectively. The chain is 2,3-dihydroxyphenylpropionate/2,3-dihydroxicinnamic acid 1,2-dioxygenase from Azotobacter vinelandii (strain DJ / ATCC BAA-1303).